Reading from the N-terminus, the 502-residue chain is Protein DETOXIFICATION 49 (502 aa).

A run of 12 helical transmembrane segments spans residues 41–61 (LPLI…MLFL), 75–95 (LALG…SIGM), 123–143 (LLCS…LLFF), 153–173 (AEIF…LHPI), 190–210 (AFFA…SLGL), 216–236 (ALGA…YIVF), 267–287 (VSVC…GLLL), 293–313 (VASM…PSSL), 338–358 (RTGL…ALMV), 372–392 (IVKL…GNCP), 414–434 (LCCF…FSGF), and 439–459 (LWLG…VVLA).

The protein belongs to the multi antimicrobial extrusion (MATE) (TC 2.A.66.1) family.

The protein localises to the membrane. This is Protein DETOXIFICATION 49 from Arabidopsis thaliana (Mouse-ear cress).